We begin with the raw amino-acid sequence, 256 residues long: Trypsin alpha (256 aa).

The N-terminal stretch at 1 to 22 (MLKIVILLSAVVCALGGTVPEG) is a signal peptide. The propeptide at 23–30 (LLPQLDGR) is activation peptide. Positions 31–254 (IVGGSATTIS…LRSWVISTAN (224 aa)) constitute a Peptidase S1 domain. C56 and C72 are disulfide-bonded. Residues H71 and D116 each act as charge relay system in the active site. Intrachain disulfides connect C180–C197 and C206–C230. The Charge relay system role is filled by S210.

The protein belongs to the peptidase S1 family.

The protein localises to the secreted. It localises to the extracellular space. The catalysed reaction is Preferential cleavage: Arg-|-Xaa, Lys-|-Xaa.. This Drosophila erecta (Fruit fly) protein is Trypsin alpha (alphaTry).